We begin with the raw amino-acid sequence, 717 residues long: Probable E3 ubiquitin-protein ligase WAVH2 (717 aa).

2 stretches are compositionally biased toward polar residues: residues Val13–Thr28 and Arg85–Thr94. Residues Val13–Gly120 form a disordered region. A compositionally biased stretch (low complexity) spans Ser95–Ser117. Residues Cys140–Ser184 form an RING-type; atypical zinc finger. A VWFA domain is found at Asp326–Val456.

In terms of tissue distribution, expressed in root tips, cotyledons, leaf primordia and hypocotyls.

The enzyme catalyses S-ubiquitinyl-[E2 ubiquitin-conjugating enzyme]-L-cysteine + [acceptor protein]-L-lysine = [E2 ubiquitin-conjugating enzyme]-L-cysteine + N(6)-ubiquitinyl-[acceptor protein]-L-lysine.. Its function is as follows. Probable E3 ubiquitin-protein ligase involved in the regulation of root growth. Acts as a positive regulator of root gravitropism. In Arabidopsis thaliana (Mouse-ear cress), this protein is Probable E3 ubiquitin-protein ligase WAVH2.